The primary structure comprises 3925 residues: Polyketide synthase ThaH (3925 aa).

The interval 1–56 (MPRWRPTWLKRLSCPKQPRHPTHPKHPTHPKHPKHPKHPRHPKHPRISRRCSSASA) is disordered. The segment covering 17–49 (QPRHPTHPKHPTHPKHPKHPKHPRHPKHPRISR) has biased composition (basic residues). The Carrier 1 domain occupies 1073-1148 (GLVGGLEGEV…DIAGYIASAE (76 aa)). Ser1108 carries the O-(pantetheine 4'-phosphoryl)serine modification. A compositionally biased stretch (low complexity) spans 1166–1182 (AAVATPPGRPAGEAAGA). Residues 1166–1233 (AAVATPPGRP…GEPARAASHG (68 aa)) are disordered. Residues 1183–1196 (QRDRAPRAADERAD) are compositionally biased toward basic and acidic residues. Residues 1202 to 1216 (PSDAHASKAAAIDSR) are compositionally biased toward low complexity. The Ketosynthase family 3 (KS3) 1 domain occupies 1237 to 1667 (ADGLAIIGIA…GTNAHALVEA (431 aa)). Active-site for beta-ketoacyl synthase 1 activity residues include Cys1413, His1549, and His1589. The segment at 1679–1698 (GATGAPDVPDAPDAPDAPDA) is disordered. Positions 1844–1969 (HPLLHRNVST…GHVQRIAEPA (126 aa)) are N-terminal hotdog fold. One can recognise a PKS/mFAS DH domain in the interval 1844–2143 (HPLLHRNVST…ARRFVREPAR (300 aa)). The Proton acceptor; for dehydratase activity role is filled by His1873. The C-terminal hotdog fold stretch occupies residues 1983–2143 (AAPRLSAARC…ARRFVREPAR (161 aa)). The active-site Proton donor; for dehydratase activity is Asp2043. Composition is skewed to low complexity over residues 2594–2607 (DDPAAASIEPAASS) and 2632–2646 (PAAAVAHAAPDASDA). 2 disordered regions span residues 2594 to 2613 (DDPAAASIEPAASSTELPEM) and 2619 to 2657 (APADAGARPRDDAPAAAVAHAAPDASDAPDARPADAAPA). Residues 2664-2737 (EHALALLKRL…ELACYFVAHH (74 aa)) form the Carrier 2 domain. An O-(pantetheine 4'-phosphoryl)serine modification is found at Ser2698. The segment covering 2753–2768 (LAPAPAQPLAPRAPSA) has biased composition (low complexity). Residues 2753–2841 (LAPAPAQPLA…AHAPAQASAP (89 aa)) form a disordered region. Positions 2770 to 2779 (PARDAARSLE) are enriched in basic and acidic residues. Low complexity-rich tracts occupy residues 2789 to 2813 (GQEPEPASQTAAASESARAPAQASA) and 2823 to 2841 (ETRTQAPAQAHAPAQASAP). A Ketosynthase family 3 (KS3) 2 domain is found at 2847 to 3286 (AFDIAIVGLA…GSNAHLIVEE (440 aa)). Catalysis depends on for beta-ketoacyl synthase 2 activity residues Cys3022, His3157, and His3197. Composition is skewed to low complexity over residues 3512-3524 (ASTASRAGTPSPA) and 3578-3592 (AAAARARPGAASSPS). Disordered regions lie at residues 3512 to 3531 (ASTASRAGTPSPAVAASTGE) and 3578 to 3619 (AAAA…AAPD). A compositionally biased stretch (pro residues) spans 3593 to 3603 (PSSPSPLPSSP). The segment covering 3604-3619 (PRMSSRQHASPAAAPD) has biased composition (low complexity). Positions 3622–3699 (AALLDIEAFL…AMARHVSSNA (78 aa)) constitute a Carrier 3 domain. Ser3659 carries the post-translational modification O-(pantetheine 4'-phosphoryl)serine. The tract at residues 3734–3754 (PAPFASAAPPEPPASPARADG) is disordered. Residues 3762–3839 (TSLDAIRAHL…ALARFVGTQL (78 aa)) form the Carrier 4 domain. The residue at position 3799 (Ser3799) is an O-(pantetheine 4'-phosphoryl)serine.

It belongs to the ATP-dependent AMP-binding enzyme family. The cofactor is pantetheine 4'-phosphate.

Its subcellular location is the cytoplasm. It participates in antibiotic biosynthesis. Its function is as follows. Involved in production of the polyketide antibiotic thailandamide. The protein is Polyketide synthase ThaH of Burkholderia thailandensis (strain ATCC 700388 / DSM 13276 / CCUG 48851 / CIP 106301 / E264).